The chain runs to 667 residues: Probable Na(+)/H(+) antiporter nhx-9 (667 aa).

The next 8 helical transmembrane spans lie at 41–61 (VYVITVWLLIASLAKILFNLM), 73–93 (LLIIVGLALGWILHQTSLSGA), 97–117 (SHTFFLYLLPPIIFDAGYFMP), 128–148 (VLVFSVFGTIWNTFAIGGSLL), 165–185 (ILVFSALISAVDPVAVIAVFE), 192–212 (FLFINVFGEALFNDGVTVVLY), 236–256 (LSFFVVALGGAAVGIIFAIAA), and 268–288 (ILAPVFIFVLPYMAYLTAEMV). N-linked (GlcNAc...) asparagine glycosylation occurs at asparagine 310. Transmembrane regions (helical) follow at residues 325–345 (MLAQSSETVIFMFLGLSTISS), 351–371 (LYFICATLFFCLIYRAIGIVV), 390–410 (FIMSYGGLRGAIAYGLVVSIP), and 418–438 (MFITATIAVIYFTVFLQGITI). The interval 637 to 667 (TEQLPSETPFHSGRRQSTGDLNATRRADFNV) is disordered. Position 644 is a phosphothreonine (threonine 644).

It belongs to the monovalent cation:proton antiporter 1 (CPA1) transporter (TC 2.A.36) family. In terms of processing, phosphorylated. As to expression, in early stage larva, expressed in the twin excretory cell processes. At later larval stages, expression is more restricted, resulting in a 'beads on a chain' appearance.

The protein localises to the cell membrane. Serves some physiological function other than regulation of cellular pH. This is Probable Na(+)/H(+) antiporter nhx-9 (nhx-9) from Caenorhabditis elegans.